A 419-amino-acid polypeptide reads, in one-letter code: Putative nickel insertion protein (419 aa).

The disordered stretch occupies residues 69 to 90 (HDPSNHPSQNTHHHHHHHTRHL). The segment covering 79–88 (THHHHHHHTR) has biased composition (basic residues).

The protein belongs to the LarC family.

The protein is Putative nickel insertion protein of Rippkaea orientalis (strain PCC 8801 / RF-1) (Cyanothece sp. (strain PCC 8801)).